Here is a 152-residue protein sequence, read N- to C-terminus: Putative membrane protein insertion efficiency factor (152 aa).

Residues 81–152 (AAGGYDPVPG…IVGSGRGPWV (72 aa)) form a disordered region.

It belongs to the UPF0161 family.

The protein resides in the cell membrane. In terms of biological role, could be involved in insertion of integral membrane proteins into the membrane. The chain is Putative membrane protein insertion efficiency factor from Frankia casuarinae (strain DSM 45818 / CECT 9043 / HFP020203 / CcI3).